We begin with the raw amino-acid sequence, 344 residues long: L-rhamnose-proton symporter (344 aa).

Transmembrane regions (helical) follow at residues 4–24 (AITMGIFWHLIGAASAACFYA), 38–58 (WSVGGIVSWLILPWAISATLL), 72–92 (TLLPVFLFGAMWGIGNINYGL), 101–121 (MGIGIAIGITLIVGTLMTPII), 131–151 (TQGGQMTLLGVLVAVIGVGIV), 175–195 (LLLAVMCGIFSAGMSFAMNAA), 214–234 (LPSYVVIMGGGALVNLGFCFI), 259–279 (LLLSALGGLMWYLQFFFYAWG), 290–310 (MSWMLHMSFYVLCGGLVGLVL), and 323–343 (VLSLGCVVIIIAANIVGLGMA).

It belongs to the L-rhamnose transporter (TC 2.A.7.6) family.

The protein localises to the cell inner membrane. It carries out the reaction L-rhamnopyranose(in) + H(+)(in) = L-rhamnopyranose(out) + H(+)(out). Functionally, uptake of L-rhamnose across the cytoplasmic membrane with the concomitant transport of protons into the cell (symport system). The sequence is that of L-rhamnose-proton symporter from Klebsiella pneumoniae (strain 342).